Consider the following 39-residue polypeptide: Photosystem II reaction center protein Psb30 (39 aa).

The chain crosses the membrane as a helical span at residues 12–32 (IFQLTFVGLIMVAGPVVIFLL).

The protein belongs to the Psb30/Ycf12 family. As to quaternary structure, PSII is composed of 1 copy each of membrane proteins PsbA, PsbB, PsbC, PsbD, PsbE, PsbF, PsbH, PsbI, PsbJ, PsbK, PsbL, PsbM, PsbT, PsbX, PsbY, PsbZ, Psb30/Ycf12, peripheral proteins PsbO, CyanoQ (PsbQ), PsbU, PsbV and a large number of cofactors. It forms dimeric complexes.

It localises to the cellular thylakoid membrane. In terms of biological role, a core subunit of photosystem II (PSII), probably helps stabilize the reaction center. The sequence is that of Photosystem II reaction center protein Psb30 from Rippkaea orientalis (strain PCC 8801 / RF-1) (Cyanothece sp. (strain PCC 8801)).